The chain runs to 280 residues: Phosphatidylserine decarboxylase proenzyme (280 aa).

Catalysis depends on charge relay system; for autoendoproteolytic cleavage activity residues aspartate 88, histidine 145, and serine 248. Residue serine 248 is the Schiff-base intermediate with substrate; via pyruvic acid; for decarboxylase activity of the active site. The residue at position 248 (serine 248) is a Pyruvic acid (Ser); by autocatalysis.

This sequence belongs to the phosphatidylserine decarboxylase family. PSD-B subfamily. Prokaryotic type I sub-subfamily. In terms of assembly, heterodimer of a large membrane-associated beta subunit and a small pyruvoyl-containing alpha subunit. It depends on pyruvate as a cofactor. Post-translationally, is synthesized initially as an inactive proenzyme. Formation of the active enzyme involves a self-maturation process in which the active site pyruvoyl group is generated from an internal serine residue via an autocatalytic post-translational modification. Two non-identical subunits are generated from the proenzyme in this reaction, and the pyruvate is formed at the N-terminus of the alpha chain, which is derived from the carboxyl end of the proenzyme. The autoendoproteolytic cleavage occurs by a canonical serine protease mechanism, in which the side chain hydroxyl group of the serine supplies its oxygen atom to form the C-terminus of the beta chain, while the remainder of the serine residue undergoes an oxidative deamination to produce ammonia and the pyruvoyl prosthetic group on the alpha chain. During this reaction, the Ser that is part of the protease active site of the proenzyme becomes the pyruvoyl prosthetic group, which constitutes an essential element of the active site of the mature decarboxylase.

The protein resides in the cell membrane. The enzyme catalyses a 1,2-diacyl-sn-glycero-3-phospho-L-serine + H(+) = a 1,2-diacyl-sn-glycero-3-phosphoethanolamine + CO2. It functions in the pathway phospholipid metabolism; phosphatidylethanolamine biosynthesis; phosphatidylethanolamine from CDP-diacylglycerol: step 2/2. In terms of biological role, catalyzes the formation of phosphatidylethanolamine (PtdEtn) from phosphatidylserine (PtdSer). This chain is Phosphatidylserine decarboxylase proenzyme, found in Methylobacillus flagellatus (strain ATCC 51484 / DSM 6875 / VKM B-1610 / KT).